An 85-amino-acid polypeptide reads, in one-letter code: Large ribosomal subunit protein bL27 (85 aa).

The interval 1 to 23 (MAHKKAGGSTRNGRDSESKRLGV) is disordered.

It belongs to the bacterial ribosomal protein bL27 family.

The chain is Large ribosomal subunit protein bL27 from Thioalkalivibrio sulfidiphilus (strain HL-EbGR7).